The primary structure comprises 298 residues: NAD kinase (298 aa).

Catalysis depends on aspartate 80, which acts as the Proton acceptor. NAD(+) is bound by residues 80–81 (DG), 154–155 (ND), arginine 182, aspartate 184, 195–200 (TAYALS), alanine 219, and glutamine 253.

It belongs to the NAD kinase family. The cofactor is a divalent metal cation.

The protein localises to the cytoplasm. It catalyses the reaction NAD(+) + ATP = ADP + NADP(+) + H(+). Functionally, involved in the regulation of the intracellular balance of NAD and NADP, and is a key enzyme in the biosynthesis of NADP. Catalyzes specifically the phosphorylation on 2'-hydroxyl of the adenosine moiety of NAD to yield NADP. The polypeptide is NAD kinase (Acidovorax ebreus (strain TPSY) (Diaphorobacter sp. (strain TPSY))).